The primary structure comprises 145 residues: Basic phospholipase A2 PC17 (145 aa).

The first 21 residues, 1–21 (MYPAHLLVLLAVCVSLLGASA), serve as a signal peptide directing secretion. The propeptide occupies 22 to 27 (ISNQPR). Disulfide bonds link Cys38–Cys98, Cys54–Cys144, Cys56–Cys72, Cys71–Cys125, Cys78–Cys118, Cys87–Cys111, and Cys105–Cys116. Residues Tyr55, Gly57, and Gly59 each contribute to the Ca(2+) site. His75 is a catalytic residue. Ca(2+) is bound at residue Asp76. Asp119 is an active-site residue.

Belongs to the phospholipase A2 family. Group I subfamily. D49 sub-subfamily. Ca(2+) serves as cofactor. Expressed by the venom gland.

It is found in the secreted. It carries out the reaction a 1,2-diacyl-sn-glycero-3-phosphocholine + H2O = a 1-acyl-sn-glycero-3-phosphocholine + a fatty acid + H(+). Snake venom phospholipase A2 (PLA2) that inhibits neuromuscular transmission by blocking acetylcholine release from the nerve termini. PLA2 catalyzes the calcium-dependent hydrolysis of the 2-acyl groups in 3-sn-phosphoglycerides. The sequence is that of Basic phospholipase A2 PC17 from Laticauda colubrina (Yellow-lipped sea krait).